The following is a 289-amino-acid chain: Agamous-like MADS-box protein AGL93 (289 aa).

One can recognise an MADS-box domain in the interval 18 to 78 (QTCFKKSSLS…GKLIKTWPDD (61 aa)). Residues 151–197 (EFGQTRAVSSTTNPLSPPPSLIEDHRHQQRTEPLMSGVSNTEQDLST) form a disordered region. The segment covering 187–197 (GVSNTEQDLST) has biased composition (polar residues).

In terms of tissue distribution, expressed in pollen.

It is found in the nucleus. Probable transcription factor. The sequence is that of Agamous-like MADS-box protein AGL93 from Arabidopsis thaliana (Mouse-ear cress).